The following is a 472-amino-acid chain: Alkaline phosphatase (472 aa).

A signal peptide spans 1–21 (MKQSAIALALLSCLITPVSQA). Asp74 serves as a coordination point for Mg(2+). Asp74 contacts Zn(2+). The active-site Phosphoserine intermediate is Ser125. The Mg(2+) site is built by Asp176 and Thr178. Disulfide bonds link Cys191–Cys201 and Cys309–Cys359. Residue Glu345 participates in Mg(2+) binding. 5 residues coordinate Zn(2+): Asp350, His354, Asp392, His393, and His435.

Belongs to the alkaline phosphatase family. As to quaternary structure, homodimer. It depends on Mg(2+) as a cofactor. The cofactor is Zn(2+).

The protein resides in the periplasm. It catalyses the reaction a phosphate monoester + H2O = an alcohol + phosphate. This chain is Alkaline phosphatase (phoA), found in Escherichia fergusonii (strain ATCC 35469 / DSM 13698 / CCUG 18766 / IAM 14443 / JCM 21226 / LMG 7866 / NBRC 102419 / NCTC 12128 / CDC 0568-73).